The following is a 389-amino-acid chain: Glutamate 5-kinase (389 aa).

Lys16 lines the ATP pocket. Ser56, Asp143, and Asn155 together coordinate substrate. An ATP-binding site is contributed by 175-176; the sequence is SD. One can recognise a PUA domain in the interval 281–358; sequence AGELHVDDGA…AEIETILGYP (78 aa).

This sequence belongs to the glutamate 5-kinase family.

It localises to the cytoplasm. The enzyme catalyses L-glutamate + ATP = L-glutamyl 5-phosphate + ADP. It participates in amino-acid biosynthesis; L-proline biosynthesis; L-glutamate 5-semialdehyde from L-glutamate: step 1/2. Catalyzes the transfer of a phosphate group to glutamate to form L-glutamate 5-phosphate. This Rhizobium johnstonii (strain DSM 114642 / LMG 32736 / 3841) (Rhizobium leguminosarum bv. viciae) protein is Glutamate 5-kinase.